The following is a 515-amino-acid chain: ATP synthase subunit alpha (515 aa).

171-178 contacts ATP; that stretch reads GDRQTGKT.

It belongs to the ATPase alpha/beta chains family. As to quaternary structure, F-type ATPases have 2 components, CF(1) - the catalytic core - and CF(0) - the membrane proton channel. CF(1) has five subunits: alpha(3), beta(3), gamma(1), delta(1), epsilon(1). CF(0) has three main subunits: a(1), b(2) and c(9-12). The alpha and beta chains form an alternating ring which encloses part of the gamma chain. CF(1) is attached to CF(0) by a central stalk formed by the gamma and epsilon chains, while a peripheral stalk is formed by the delta and b chains.

Its subcellular location is the cell inner membrane. The enzyme catalyses ATP + H2O + 4 H(+)(in) = ADP + phosphate + 5 H(+)(out). In terms of biological role, produces ATP from ADP in the presence of a proton gradient across the membrane. The alpha chain is a regulatory subunit. This is ATP synthase subunit alpha from Coxiella burnetii (strain CbuK_Q154) (Coxiella burnetii (strain Q154)).